Reading from the N-terminus, the 127-residue chain is Anti-adapter protein IraD (127 aa).

It belongs to the GpW/Gp25 family. IraD subfamily. In terms of assembly, interacts with RssB.

It localises to the cytoplasm. Inhibits RpoS proteolysis by regulating RssB activity, thereby increasing the stability of the sigma stress factor RpoS during oxidative stress. Its effect on RpoS stability is due to its interaction with RssB, which probably blocks the interaction of RssB with RpoS, and the consequent delivery of the RssB-RpoS complex to the ClpXP protein degradation pathway. In Escherichia coli O6:H1 (strain CFT073 / ATCC 700928 / UPEC), this protein is Anti-adapter protein IraD.